The sequence spans 119 residues: Ribonuclease P protein component (119 aa).

It belongs to the RnpA family. In terms of assembly, consists of a catalytic RNA component (M1 or rnpB) and a protein subunit.

It carries out the reaction Endonucleolytic cleavage of RNA, removing 5'-extranucleotides from tRNA precursor.. RNaseP catalyzes the removal of the 5'-leader sequence from pre-tRNA to produce the mature 5'-terminus. It can also cleave other RNA substrates such as 4.5S RNA. The protein component plays an auxiliary but essential role in vivo by binding to the 5'-leader sequence and broadening the substrate specificity of the ribozyme. The chain is Ribonuclease P protein component from Histophilus somni (strain 129Pt) (Haemophilus somnus).